We begin with the raw amino-acid sequence, 290 residues long: HTH-type transcriptional activator RhaR (290 aa).

An HTH araC/xylS-type domain is found at 179–277 (DLIMSALQQS…GMTPRDYRQR (99 aa)). DNA-binding regions (H-T-H motif) lie at residues 196–217 (ADFCHKNQLVERSLKQLFRQQT) and 244–267 (ISDIAARCGFEDSNYFSAVFTREA).

Binds DNA as a dimer.

It is found in the cytoplasm. Activates expression of the rhaSR operon in response to L-rhamnose. The chain is HTH-type transcriptional activator RhaR from Yersinia pestis bv. Antiqua (strain Antiqua).